The primary structure comprises 508 residues: UDP-N-acetylmuramoyl-L-alanyl-D-glutamate--2,6-diaminopimelate ligase (508 aa).

Ser-43 lines the UDP-N-acetyl-alpha-D-muramoyl-L-alanyl-D-glutamate pocket. Residue 124–130 (GTNGKTT) participates in ATP binding. Residues 166 to 167 (TT), Ser-193, and Arg-201 each bind UDP-N-acetyl-alpha-D-muramoyl-L-alanyl-D-glutamate. Residue Lys-233 is modified to N6-carboxylysine. Meso-2,6-diaminopimelate contacts are provided by residues Arg-404, 428 to 431 (DNPR), Gly-478, and Glu-482. The Meso-diaminopimelate recognition motif signature appears at 428–431 (DNPR).

This sequence belongs to the MurCDEF family. MurE subfamily. It depends on Mg(2+) as a cofactor. In terms of processing, carboxylation is probably crucial for Mg(2+) binding and, consequently, for the gamma-phosphate positioning of ATP.

The protein localises to the cytoplasm. It carries out the reaction UDP-N-acetyl-alpha-D-muramoyl-L-alanyl-D-glutamate + meso-2,6-diaminopimelate + ATP = UDP-N-acetyl-alpha-D-muramoyl-L-alanyl-gamma-D-glutamyl-meso-2,6-diaminopimelate + ADP + phosphate + H(+). Its pathway is cell wall biogenesis; peptidoglycan biosynthesis. Catalyzes the addition of meso-diaminopimelic acid to the nucleotide precursor UDP-N-acetylmuramoyl-L-alanyl-D-glutamate (UMAG) in the biosynthesis of bacterial cell-wall peptidoglycan. In Chlorobaculum tepidum (strain ATCC 49652 / DSM 12025 / NBRC 103806 / TLS) (Chlorobium tepidum), this protein is UDP-N-acetylmuramoyl-L-alanyl-D-glutamate--2,6-diaminopimelate ligase.